Consider the following 318-residue polypeptide: Magnetosome protein MamM (318 aa).

A transmembrane domain (TMD) region spans residues 1–210 (MRKSGCTVCS…FMDAYRGLMD (210 aa)). A run of 4 helical transmembrane segments spans residues 13-33 (IGWV…FVGL), 39-59 (AMLA…MVVI), 81-101 (FILS…LLVH), and 117-137 (LIVL…YFYS). The segment at 211–318 (HTAGEAVQNR…DEVMLSKVDN (108 aa)) is C-terminal domain (CTD). 4 residues coordinate Fe cation: Asp249, His264, His285, and Glu289.

The protein belongs to the cation diffusion facilitator (CDF) transporter (TC 2.A.4) family. As to quaternary structure, forms homodimers via its C-terminal domain (CTD) in the presence of metal cations. Interacts with MamB via their CTD.

It localises to the magnetosome membrane. It is found in the cell inner membrane. Functionally, probably plays a role in biomineralization. Required for stable accumulation of MamB. Probably binds and transports iron. May nucleate iron crystal formation. The sequence is that of Magnetosome protein MamM (mamM) from Paramagnetospirillum magneticum (strain ATCC 700264 / AMB-1) (Magnetospirillum magneticum).